The primary structure comprises 501 residues: Dipeptide and tripeptide permease B (501 aa).

Topologically, residues 1–27 (MRPSAPTGLLQQPKPFFMIFFVELWER) are cytoplasmic. A helical transmembrane segment spans residues 28-48 (FGYYGVQGILAVFFVQQLGFS). Residues 49-52 (QEQS) lie on the Periplasmic side of the membrane. A helical membrane pass occupies residues 53 to 73 (FITFGAFSALVYGLISVGGYV). Topologically, residues 74 to 82 (GDHVLGTKR) are cytoplasmic. Residues 83–103 (TMVLGAIVLVIGYFMTGMSIY) form a helical membrane-spanning segment. The Periplasmic segment spans residues 104-106 (NPD). A helical transmembrane segment spans residues 107-127 (LIFYALGTIAVGNCLFKANPA). At 128–146 (SLLAKCYERGDPRLDGAFT) the chain is on the cytoplasmic side. Residues 147-167 (LFYMSINIGSLISLSLAPVIA) form a helical membrane-spanning segment. At 168 to 172 (DHYGY) the chain is on the periplasmic side. Residues 173–193 (TVTYNLCGVGLVIALLTFFAC) traverse the membrane as a helical segment. The Cytoplasmic segment spans residues 194–211 (RHMVRDIGSEPDHLPLDY). Residues 212–232 (GKLLLVLLGSVALVFFCAWLM) form a helical membrane-spanning segment. A topological domain (periplasmic) is located at residue His-233. A helical transmembrane segment spans residues 234–254 (HVVIANMVLMTVTLAVVIFFF). At 255 to 267 (REAFKLDAVARNK) the chain is on the cytoplasmic side. A helical transmembrane segment spans residues 268–288 (MYVAFVLMLEAVVFYVLYAQM). Over 289–311 (PTSLNFFAINNMHHEMLGMSVNP) the chain is Periplasmic. Residues 312-332 (ISFQALNPFWVVVGSPVLAMI) traverse the membrane as a helical segment. Topologically, residues 333 to 350 (YTRLGSKGRDLTMPLKFT) are cytoplasmic. Residues 351 to 371 (LGMLFCSLGFLTAAASGIWFA) traverse the membrane as a helical segment. The Periplasmic portion of the chain corresponds to 372 to 380 (DAQGLTSPW). The helical transmembrane segment at 381-401 (FMVLIYLFQSLGELMISALGL) threads the bilayer. Topologically, residues 402-411 (AMVAALVPQR) are cytoplasmic. A helical membrane pass occupies residues 412–432 (LMGFILGMWFLTQAMASLLGG). Residues 433–456 (YVATFTAVPQGVTDPLQTLPIYTD) are Periplasmic-facing. Residues 457–477 (VFGKIGLVTLLVAVVMALMVP) form a helical membrane-spanning segment. The Cytoplasmic portion of the chain corresponds to 478-501 (WLNRMMHAGQGEEGEDLLSQQAKA).

The protein belongs to the major facilitator superfamily. Proton-dependent oligopeptide transporter (POT/PTR) (TC 2.A.17) family. DtpB subfamily.

The protein localises to the cell inner membrane. In terms of biological role, proton-dependent permease that transports di- and tripeptides. The polypeptide is Dipeptide and tripeptide permease B (Aeromonas hydrophila subsp. hydrophila (strain ATCC 7966 / DSM 30187 / BCRC 13018 / CCUG 14551 / JCM 1027 / KCTC 2358 / NCIMB 9240 / NCTC 8049)).